The following is a 203-amino-acid chain: LexA repressor (203 aa).

A DNA-binding region (H-T-H motif) is located at residues 28-47; that stretch reads IREIGDEFGITAKGAYDHLK. Catalysis depends on for autocatalytic cleavage activity residues serine 127 and lysine 164.

It belongs to the peptidase S24 family. In terms of assembly, homodimer.

It catalyses the reaction Hydrolysis of Ala-|-Gly bond in repressor LexA.. Functionally, represses a number of genes involved in the response to DNA damage (SOS response), including recA and lexA. In the presence of single-stranded DNA, RecA interacts with LexA causing an autocatalytic cleavage which disrupts the DNA-binding part of LexA, leading to derepression of the SOS regulon and eventually DNA repair. This Leptospira interrogans serogroup Icterohaemorrhagiae serovar copenhageni (strain Fiocruz L1-130) protein is LexA repressor.